A 72-amino-acid polypeptide reads, in one-letter code: Small ribosomal subunit protein bS18 (72 aa).

It belongs to the bacterial ribosomal protein bS18 family. As to quaternary structure, part of the 30S ribosomal subunit. Forms a tight heterodimer with protein bS6.

Functionally, binds as a heterodimer with protein bS6 to the central domain of the 16S rRNA, where it helps stabilize the platform of the 30S subunit. The sequence is that of Small ribosomal subunit protein bS18 from Francisella tularensis subsp. novicida (strain U112).